A 313-amino-acid polypeptide reads, in one-letter code: PGR5-like protein 1B, chloroplastic (313 aa).

The transit peptide at 1 to 49 (MAFTLTIPRFSAISRKPITCSSSRTQCPAPFTHGRSISLRRRLTLLPLK) directs the protein to the chloroplast. Position 50 is an N-acetylalanine (alanine 50). Over 50–187 (ASTDQSGQVG…KVYSDLAIDY (138 aa)) the chain is Stromal. Cysteine 71 and cysteine 172 are oxidised to a cystine. Residues 188-208 (FKMFLLNVPATVVALGLFFFL) form a helical membrane-spanning segment. The Lumenal, thylakoid segment spans residues 209–225 (DDITGFEITYLLELPEP). The chain crosses the membrane as a helical span at residues 226–246 (FSFIFTWFAAVPAIVYLALSL). The Stromal portion of the chain corresponds to 247–313 (TKLILKDFLI…LITLPEGGKA (67 aa)).

The protein belongs to the PGR5 family. In terms of assembly, homodimer and heterodimer with PGR5. Interacts with PGR5, FD2, psaD1, LFNR1 and LFNR2. Also interacts with petC and a Fe-containing cofactor (FCC). Post-translationally, disulfide bonds; Cys-289 and Cys-292 are probably involved in the formation of disulfide bridges with 'Cys-11' and 'Cys-105' of PGR5 while Cys-261 and Cys-264 are probably involved in the binding of a Fe-containing cofactor (FCC).

It is found in the plastid. It localises to the chloroplast thylakoid membrane. With respect to regulation, inhibited by antimycin A. Functionally, ferredoxin-plastoquinone reductase involved in cyclic electron flow (CEF) around photosystem I. The homodimer is probably not involved in CEF. In Arabidopsis thaliana (Mouse-ear cress), this protein is PGR5-like protein 1B, chloroplastic (PGRL1B).